Consider the following 516-residue polypeptide: Cysteine--tRNA ligase (516 aa).

Cys34 is a Zn(2+) binding site. Positions Pro36 to Asn46 match the 'HIGH' region motif. Cys225, His250, and Glu254 together coordinate Zn(2+). Residues Lys285 to Ser289 carry the 'KMSKS' region motif. Lys288 provides a ligand contact to ATP.

It belongs to the class-I aminoacyl-tRNA synthetase family. As to quaternary structure, monomer. Requires Zn(2+) as cofactor.

It localises to the cytoplasm. It carries out the reaction tRNA(Cys) + L-cysteine + ATP = L-cysteinyl-tRNA(Cys) + AMP + diphosphate. The sequence is that of Cysteine--tRNA ligase from Zymomonas mobilis subsp. mobilis (strain ATCC 31821 / ZM4 / CP4).